A 2346-amino-acid polypeptide reads, in one-letter code: N-benzoylphenylalaninol synthetase apmA (2346 aa).

The segment at 263-652 (ESAAQKSPDA…GRKDLQVKIR (390 aa)) is adenylation 1. The region spanning 784–860 (MPTTTTEMTL…DMAKAMTSTR (77 aa)) is the Carrier 1 domain. Ser-821 bears the O-(pantetheine 4'-phosphoryl)serine mark. The interval 896-1306 (QDAYPCSPLQ…ISPQDKENLL (411 aa)) is condensation. Residues 1330–1713 (SQPNAPAICA…GRKDTQVKIR (384 aa)) form an adenylation 2 region. One can recognise a Carrier 2 domain in the interval 1842–1924 (SALRASEDKA…GLAAFIDAEL (83 aa)). Residue Ser-1883 is modified to O-(pantetheine 4'-phosphoryl)serine. The reductase (R) domain stretch occupies residues 1960-2311 (VTGGTGFLGT…RNVQFLVEAG (352 aa)).

The protein belongs to the NRP synthetase family.

The enzyme catalyses benzoate + L-phenylalanine + 2 AH2 + 2 ATP = N-benzoyl-L-phenylalaninol + 2 A + 2 AMP + 2 diphosphate + H(+). The protein operates within secondary metabolite biosynthesis. Nonribosomal peptide synthase; part of the gene cluster that mediates the biosynthesis of asperphenamate, a rare linear amino acid ester that exhibits antitumor activity towards a number of cell lines. The structure of asperphenamate contains two subunits, N-benzoylphenylalanine and N-benzoylphenylalaninol, which are connected by an inter-molecular ester bond. The first step of asperphenamate biosynthesis is the generation of N-benzoylphenylalaninol by the nonribosomal peptide synthase apmA. Using phenylalanine and benzoic acid as substrates, apmA catalyzes amide bond formation and tethers the intermediate into the NRPS chain. Then, the terminal R domain of apmA catalyzes the reduction reaction to get the shunt product N-benzoylphenylalaninol. Subsequently, the nonribosomal peptide synthase apmB activates the same substrates as does apmA (phenylalanine and benzoic acid) to produce N-benzoylphenylalanine before condensing N-benzoylphenylalanine and N-benzoylphenylalaninol to release asperphenamate. This chain is N-benzoylphenylalaninol synthetase apmA, found in Penicillium brevicompactum.